The sequence spans 231 residues: Enolase-phosphatase E1 (231 aa).

Residues D11 and E13 each contribute to the Mg(2+) site. Residues 125 to 126 (SS) and K162 contribute to the substrate site. D188 is a Mg(2+) binding site.

The protein belongs to the HAD-like hydrolase superfamily. MasA/MtnC family. Monomer. Mg(2+) is required as a cofactor.

It is found in the cytoplasm. It localises to the nucleus. It catalyses the reaction 5-methylsulfanyl-2,3-dioxopentyl phosphate + H2O = 1,2-dihydroxy-5-(methylsulfanyl)pent-1-en-3-one + phosphate. Its pathway is amino-acid biosynthesis; L-methionine biosynthesis via salvage pathway; L-methionine from S-methyl-5-thio-alpha-D-ribose 1-phosphate: step 3/6. The protein operates within amino-acid biosynthesis; L-methionine biosynthesis via salvage pathway; L-methionine from S-methyl-5-thio-alpha-D-ribose 1-phosphate: step 4/6. Bifunctional enzyme that catalyzes the enolization of 2,3-diketo-5-methylthiopentyl-1-phosphate (DK-MTP-1-P) into the intermediate 2-hydroxy-3-keto-5-methylthiopentenyl-1-phosphate (HK-MTPenyl-1-P), which is then dephosphorylated to form the acireductone 1,2-dihydroxy-3-keto-5-methylthiopentene (DHK-MTPene). The polypeptide is Enolase-phosphatase E1 (Pyricularia oryzae (strain 70-15 / ATCC MYA-4617 / FGSC 8958) (Rice blast fungus)).